An 876-amino-acid chain; its full sequence is Valine--tRNA ligase (876 aa).

The 'HIGH' region signature appears at 44-54; the sequence is PNVTGKLHLGH. The short motif at 520-524 is the 'KMSKS' region element; the sequence is KMSKS. ATP is bound at residue Lys-523. Residues 805 to 876 are a coiled coil; it reads LEGLIDMDKE…VKSRIEQLKA (72 aa).

The protein belongs to the class-I aminoacyl-tRNA synthetase family. ValS type 1 subfamily. As to quaternary structure, monomer.

It is found in the cytoplasm. The catalysed reaction is tRNA(Val) + L-valine + ATP = L-valyl-tRNA(Val) + AMP + diphosphate. Functionally, catalyzes the attachment of valine to tRNA(Val). As ValRS can inadvertently accommodate and process structurally similar amino acids such as threonine, to avoid such errors, it has a 'posttransfer' editing activity that hydrolyzes mischarged Thr-tRNA(Val) in a tRNA-dependent manner. This is Valine--tRNA ligase from Staphylococcus epidermidis (strain ATCC 35984 / DSM 28319 / BCRC 17069 / CCUG 31568 / BM 3577 / RP62A).